The following is a 107-amino-acid chain: SH3 domain-binding glutamic acid-rich-like protein 2 (107 aa).

The SH3-binding signature appears at 61 to 67 (QGNPLPP).

It belongs to the SH3BGR family.

It is found in the nucleus. This chain is SH3 domain-binding glutamic acid-rich-like protein 2 (Sh3bgrl2), found in Mus musculus (Mouse).